The chain runs to 420 residues: Dihydrolipoyllysine-residue succinyltransferase component of 2-oxoglutarate dehydrogenase complex (420 aa).

The Lipoyl-binding domain maps to 1–76 (MAEVKVPELA…EVGQAVAVVG (76 aa)). Lysine 42 carries the N6-lipoyllysine modification. Positions 75 to 199 (VGEGQVNTSN…IREKMSRRKK (125 aa)) are disordered. Positions 81 to 90 (NTSNDSSNES) are enriched in polar residues. Basic and acidic residues predominate over residues 91–102 (SQKDEAKEKETP). The span at 103–127 (KQSNPNSSESENTQDNSQQRINATP) shows a compositional bias: polar residues. The region spanning 124–160 (NATPSARRHARKNGVDLSEVSGKGNDVLRKDDVENSQ) is the Peripheral subunit-binding (PSBD) domain. Residues 149-158 (DVLRKDDVEN) show a composition bias toward basic and acidic residues. Over residues 159-174 (SQKSSSQTAKSESKSQ) the composition is skewed to low complexity. Polar residues predominate over residues 175–186 (NSGSKQTNNNPS). Catalysis depends on residues histidine 391 and aspartate 395.

The protein belongs to the 2-oxoacid dehydrogenase family. In terms of assembly, forms a 24-polypeptide structural core with octahedral symmetry. Part of the 2-oxoglutarate dehydrogenase (OGDH) complex composed of E1 (2-oxoglutarate dehydrogenase), E2 (dihydrolipoamide succinyltransferase) and E3 (dihydrolipoamide dehydrogenase); the complex contains multiple copies of the three enzymatic components (E1, E2 and E3). (R)-lipoate is required as a cofactor.

It catalyses the reaction N(6)-[(R)-dihydrolipoyl]-L-lysyl-[protein] + succinyl-CoA = N(6)-[(R)-S(8)-succinyldihydrolipoyl]-L-lysyl-[protein] + CoA. It functions in the pathway amino-acid degradation; L-lysine degradation via saccharopine pathway; glutaryl-CoA from L-lysine: step 6/6. E2 component of the 2-oxoglutarate dehydrogenase (OGDH) complex which catalyzes the second step in the conversion of 2-oxoglutarate to succinyl-CoA and CO(2). The sequence is that of Dihydrolipoyllysine-residue succinyltransferase component of 2-oxoglutarate dehydrogenase complex (odhB) from Staphylococcus epidermidis (strain ATCC 35984 / DSM 28319 / BCRC 17069 / CCUG 31568 / BM 3577 / RP62A).